The sequence spans 1360 residues: S-layer protein A (1360 aa).

A signal peptide spans 1 to 24 (MNKSAIRYLSLLLVFLMGGSFLAG).

The protein belongs to the Sulfolobales SlaA family. The mushroom-shaped unit cells of the Sulfolobales' S-layers may consist of three SlaB subunits and six SlaA subunits.

It localises to the secreted. It is found in the cell wall. The protein localises to the S-layer. Functionally, S-layer large protein. May form the highly ordered outer sheath. The chain is S-layer protein A from Metallosphaera sedula (strain ATCC 51363 / DSM 5348 / JCM 9185 / NBRC 15509 / TH2).